A 569-amino-acid chain; its full sequence is Matrix metalloproteinase-21 (569 aa).

The N-terminal stretch at 1-24 (MLAASIFRPTLLLCWLAAPWPTQP) is a signal peptide. Positions 25 to 144 (ESLFHSRDRS…GPPPRARSRR (120 aa)) are excised as a propeptide. The short motif at 115–122 (PRCGVPDM) is the Cysteine switch element. The segment at 115–166 (PRCGVPDMRPPPPSAPPSPPGPPPRARSRRSPRAPLSLSRRGWQPRGYPDGG) is disordered. Cysteine 117 contacts Zn(2+). The span at 122-139 (MRPPPPSAPPSPPGPPPR) shows a compositional bias: pro residues. Positions 147-156 (RAPLSLSRRG) are enriched in low complexity. A Zn(2+)-binding site is contributed by histidine 283. Glutamate 284 is an active-site residue. Histidine 287 and histidine 293 together coordinate Zn(2+). A disulfide bridge connects residues cysteine 329 and cysteine 560. Hemopexin repeat units follow at residues 330-389 (EGSF…WPGI), 391-447 (THNI…FPGI), 448-496 (PSPL…FPAV), and 503-559 (FRNI…WFDV). N-linked (GlcNAc...) asparagine glycosylation is present at asparagine 372.

It belongs to the peptidase M10A family. Zn(2+) is required as a cofactor. It depends on Ca(2+) as a cofactor. Post-translationally, the precursor is cleaved by a furin endopeptidase. In terms of tissue distribution, identified in fetal brain, kidney and liver. In adult tissues found primarily in ovary, kidney, liver, lung, placenta, brain and peripheral blood leukocytes. Expressed as well in various cancer cell lines.

The protein resides in the secreted. Plays a specialized role in the generation of left-right asymmetry during embryogenesis. May act as a negative regulator of the NOTCH-signaling pathway. Cleaves alpha-1-antitrypsin. The protein is Matrix metalloproteinase-21 (MMP21) of Homo sapiens (Human).